A 347-amino-acid chain; its full sequence is MLQYNQSPHMPQDPSLHSKFQMSSSAPIEISFQMHQEPARNLPFQMCQSPLVIPRSPMQSSHSVPERDLCPQESQGPSGKSSIQMQPGLVMDPALPILRSLLMHSPHQIPSRSSVRAGFQGSLGPMVRSPSYGDRRVSLVTPRKHRKIRTVYTEEQKCVLKKHFHKCTYPSREQRMALAVLVGVTANEIQIWFKNHRAKSKRESLQNVPAALPETNGSSEAVSESVHFPDSLPVVASANGESMWSGTFGEDSIPNLNWSQESSPPHYQACDSARYCPQEYLLNGHAPVTAWNSGQSVAVEVQTGLAVAEAPVVMVASTQGPEYAQDSGPSTEELWQRVLEDFDELGD.

Disordered regions lie at residues 1–20 (MLQY…HSKF) and 54–86 (PRSP…IQMQ). The segment covering 72 to 85 (QESQGPSGKSSIQM) has biased composition (polar residues). Positions 145–204 (HRKIRTVYTEEQKCVLKKHFHKCTYPSREQRMALAVLVGVTANEIQIWFKNHRAKSKRES) form a DNA-binding region, homeobox.

The protein belongs to the paired homeobox family. Obox subfamily. As to expression, specifically expressed in early embryos.

The protein resides in the nucleus. Transcription factor required for zygotic genome activation (ZGA), a critical event in early embryonic development during which the developmental control passes from maternally provided mRNAs to the expression of the zygotic genome after fertilization. This chain is Oocyte-specific homeobox protein 6, found in Mus musculus (Mouse).